A 161-amino-acid chain; its full sequence is Regulator of ribonuclease activity A (161 aa).

It belongs to the RraA family. As to quaternary structure, homotrimer. Binds to both RNA-binding sites in the C-terminal region of Rne and to RhlB.

The protein resides in the cytoplasm. Functionally, globally modulates RNA abundance by binding to RNase E (Rne) and regulating its endonucleolytic activity. Can modulate Rne action in a substrate-dependent manner by altering the composition of the degradosome. Modulates RNA-binding and helicase activities of the degradosome. This is Regulator of ribonuclease activity A from Salmonella agona (strain SL483).